The chain runs to 514 residues: Threonine synthase (514 aa).

Lys-124 carries the post-translational modification N6-(pyridoxal phosphate)lysine. Pyridoxal 5'-phosphate is bound by residues Gly-277, Asn-278, Phe-279, Asp-281, and Thr-449. Ser-467 carries the post-translational modification Phosphoserine.

Belongs to the threonine synthase family. The cofactor is pyridoxal 5'-phosphate.

It carries out the reaction O-phospho-L-homoserine + H2O = L-threonine + phosphate. Its pathway is amino-acid biosynthesis; L-threonine biosynthesis; L-threonine from L-aspartate: step 5/5. Its function is as follows. Catalyzes the gamma-elimination of phosphate from L-phosphohomoserine and the beta-addition of water to produce L-threonine. This chain is Threonine synthase (THR4), found in Saccharomyces cerevisiae (strain ATCC 204508 / S288c) (Baker's yeast).